Consider the following 61-residue polypeptide: Small ribosomal subunit protein uS14B (61 aa).

4 residues coordinate Zn(2+): cysteine 24, cysteine 27, cysteine 40, and cysteine 43.

The protein belongs to the universal ribosomal protein uS14 family. Zinc-binding uS14 subfamily. As to quaternary structure, part of the 30S ribosomal subunit. Contacts proteins S3 and S10. It depends on Zn(2+) as a cofactor.

Its function is as follows. Binds 16S rRNA, required for the assembly of 30S particles and may also be responsible for determining the conformation of the 16S rRNA at the A site. This Bacillus licheniformis (strain ATCC 14580 / DSM 13 / JCM 2505 / CCUG 7422 / NBRC 12200 / NCIMB 9375 / NCTC 10341 / NRRL NRS-1264 / Gibson 46) protein is Small ribosomal subunit protein uS14B.